Here is a 258-residue protein sequence, read N- to C-terminus: Imidazole glycerol phosphate synthase subunit HisF (258 aa).

Residues Asp-11 and Asp-130 contribute to the active site.

This sequence belongs to the HisA/HisF family. In terms of assembly, heterodimer of HisH and HisF.

It localises to the cytoplasm. It carries out the reaction 5-[(5-phospho-1-deoxy-D-ribulos-1-ylimino)methylamino]-1-(5-phospho-beta-D-ribosyl)imidazole-4-carboxamide + L-glutamine = D-erythro-1-(imidazol-4-yl)glycerol 3-phosphate + 5-amino-1-(5-phospho-beta-D-ribosyl)imidazole-4-carboxamide + L-glutamate + H(+). It participates in amino-acid biosynthesis; L-histidine biosynthesis; L-histidine from 5-phospho-alpha-D-ribose 1-diphosphate: step 5/9. IGPS catalyzes the conversion of PRFAR and glutamine to IGP, AICAR and glutamate. The HisF subunit catalyzes the cyclization activity that produces IGP and AICAR from PRFAR using the ammonia provided by the HisH subunit. The sequence is that of Imidazole glycerol phosphate synthase subunit HisF from Shigella boydii serotype 4 (strain Sb227).